Here is a 274-residue protein sequence, read N- to C-terminus: MRKIAIYGKGGIGKSTTTQNTVAGLAEMGNKVMVVGCDPKADSTRLLLGGLTQKTVLDTLREEGEDVELEDIIKEGYGASRCTESGGPEPGVGCAGRGIITSVNLLEQLGAYDDEWGLDYVFYDVLGDVVCGGFAMPIRDGKAQEIYIVVSGEMMAMYAANNICKGILKYADAGGVRLGGLICNSRKVDNEREMIEELARQLGTQMIHFVPRDNMVQRAEINRKTVIDFDPSHNQADEYRALATKIDQNEMFVIPKPLEIEELEKLLIDFGIAN.

G8–S15 lines the ATP pocket. Residue C94 coordinates [4Fe-4S] cluster. R97 carries the ADP-ribosylarginine; by dinitrogenase reductase ADP-ribosyltransferase modification. [4Fe-4S] cluster is bound at residue C131.

Belongs to the NifH/BchL/ChlL family. In terms of assembly, homodimer. The cofactor is [4Fe-4S] cluster. The reversible ADP-ribosylation of Arg-97 inactivates the nitrogenase reductase and regulates nitrogenase activity.

The enzyme catalyses N2 + 8 reduced [2Fe-2S]-[ferredoxin] + 16 ATP + 16 H2O = H2 + 8 oxidized [2Fe-2S]-[ferredoxin] + 2 NH4(+) + 16 ADP + 16 phosphate + 6 H(+). Functionally, the key enzymatic reactions in nitrogen fixation are catalyzed by the nitrogenase complex, which has 2 components: the iron protein and the molybdenum-iron protein. This Prosthecochloris aestuarii (strain DSM 271 / SK 413) protein is Nitrogenase iron protein.